Reading from the N-terminus, the 135-residue chain is MGGSKVYSLAEVSEHSQPNDCWLVIGGKVYDVTKFLDDHPGGADVLLSSTAKDATDDFEDIGHSSSARAMMDEMCVGDIDSSTIPTKTSYTPPKQPLYNQDKTPQFIIKLLQFLVPLIILGVAVGIRFYKKQSSD.

The 77-residue stretch at 4 to 80 folds into the Cytochrome b5 heme-binding domain; the sequence is SKVYSLAEVS…MDEMCVGDID (77 aa). Positions 39 and 63 each coordinate heme. The chain crosses the membrane as a helical span at residues 106-126; it reads FIIKLLQFLVPLIILGVAVGI.

This sequence belongs to the cytochrome b5 family.

Its subcellular location is the endoplasmic reticulum membrane. The protein resides in the microsome membrane. In terms of biological role, membrane bound hemoprotein which function as an electron carrier for several membrane bound oxygenases. This is Cytochrome b5 from Cuscuta reflexa (Southern Asian dodder).